A 105-amino-acid polypeptide reads, in one-letter code: MLLNKITFFERFEHDILSGAKTITLRDEAESHVITGQILPVSTFETDRWFCDIQIIDVTPVKLTELTEMHAKQENMTLPQLRDVIAEIYPGLEQLFMIRFRILLQ.

Residues 7–93 (TFFERFEHDI…VIAEIYPGLE (87 aa)) form the ASCH domain. Lys21 functions as the Proton acceptor in the catalytic mechanism. The Nucleophile role is filled by Thr24. Glu74 acts as the Proton donor in catalysis.

The protein belongs to the N(4)-acetylcytidine amidohydrolase family.

It carries out the reaction N(4)-acetylcytidine + H2O = cytidine + acetate + H(+). The catalysed reaction is N(4)-acetyl-2'-deoxycytidine + H2O = 2'-deoxycytidine + acetate + H(+). The enzyme catalyses N(4)-acetylcytosine + H2O = cytosine + acetate + H(+). Functionally, catalyzes the hydrolysis of N(4)-acetylcytidine (ac4C). This chain is N(4)-acetylcytidine amidohydrolase, found in Shewanella baltica (strain OS155 / ATCC BAA-1091).